Here is a 258-residue protein sequence, read N- to C-terminus: Trans-aconitate 2-methyltransferase (258 aa).

It belongs to the methyltransferase superfamily. Tam family.

Its subcellular location is the cytoplasm. The catalysed reaction is trans-aconitate + S-adenosyl-L-methionine = (E)-3-(methoxycarbonyl)pent-2-enedioate + S-adenosyl-L-homocysteine. Catalyzes the S-adenosylmethionine monomethyl esterification of trans-aconitate. In Methylobacterium nodulans (strain LMG 21967 / CNCM I-2342 / ORS 2060), this protein is Trans-aconitate 2-methyltransferase.